The chain runs to 425 residues: D-tagatose 6-phosphate 4-epimerase (425 aa).

This sequence belongs to the GatZ/KbaZ family.

The catalysed reaction is keto-D-tagatose 6-phosphate = keto-D-fructose 6-phosphate. It functions in the pathway carbohydrate metabolism. In terms of biological role, involved in galactitol and D-altritol catabolism. Catalyzes the epimerization of D-tagatose 6-phosphate to D-fructose 6-phosphate. This Agrobacterium fabrum (strain C58 / ATCC 33970) (Agrobacterium tumefaciens (strain C58)) protein is D-tagatose 6-phosphate 4-epimerase.